We begin with the raw amino-acid sequence, 908 residues long: Transcriptional repressor ILP1 (908 aa).

Disordered stretches follow at residues 1 to 113 (MGSN…PQAG) and 238 to 277 (VGPR…EEDK). Residues 25–47 (ATPSSKPTSTLSSSKPKTLSASA) are compositionally biased toward low complexity. Residues 426–453 (MQNKGSLIEEIEDQMKELNEKHALSILE) are a coiled coil. A compositionally biased stretch (basic and acidic residues) spans 513–530 (EFGRDENLQKRREVEQRA). A disordered region spans residues 513 to 574 (EFGRDENLQK…ESDTETSAYK (62 aa)).

Belongs to the GCF family. Interacts with STIPL1/NTR1.

The protein resides in the nucleus. Transcriptional repressor regulating endoreduplication through control of A-type cyclins expression. Does not bind to promoter sequences (in vitro) and may act by interacting with tissue-specific transcription factors. Enhances the endocycle in endoreduplicating cells in seedlings. Required for efficient splicing. The sequence is that of Transcriptional repressor ILP1 from Arabidopsis thaliana (Mouse-ear cress).